Here is a 256-residue protein sequence, read N- to C-terminus: Putative ankyrin repeat protein PAE1861 (256 aa).

ANK repeat units follow at residues 1 to 30 (MDCN…SPDV), 34 to 63 (YGRT…DPNA), 67 to 92 (EGKT…ASAV), 93 to 122 (GVEE…RPGA), 124 to 151 (HGES…DPNA), 155 to 184 (HGKT…DVNV), 188 to 214 (AGRT…DLNA), and 218 to 245 (MGRT…PVPD).

The polypeptide is Putative ankyrin repeat protein PAE1861 (Pyrobaculum aerophilum (strain ATCC 51768 / DSM 7523 / JCM 9630 / CIP 104966 / NBRC 100827 / IM2)).